The following is a 1072-amino-acid chain: DNA-directed RNA polymerase subunit beta (1072 aa).

It belongs to the RNA polymerase beta chain family. In terms of assembly, in plastids the minimal PEP RNA polymerase catalytic core is composed of four subunits: alpha, beta, beta', and beta''. When a (nuclear-encoded) sigma factor is associated with the core the holoenzyme is formed, which can initiate transcription.

The protein localises to the plastid. The protein resides in the chloroplast. The enzyme catalyses RNA(n) + a ribonucleoside 5'-triphosphate = RNA(n+1) + diphosphate. In terms of biological role, DNA-dependent RNA polymerase catalyzes the transcription of DNA into RNA using the four ribonucleoside triphosphates as substrates. This chain is DNA-directed RNA polymerase subunit beta, found in Crucihimalaya wallichii (Rock-cress).